The sequence spans 357 residues: DNA replication and repair protein RecF (357 aa).

An ATP-binding site is contributed by 30–37 (GANGSGKT).

This sequence belongs to the RecF family.

Its subcellular location is the cytoplasm. The RecF protein is involved in DNA metabolism; it is required for DNA replication and normal SOS inducibility. RecF binds preferentially to single-stranded, linear DNA. It also seems to bind ATP. The sequence is that of DNA replication and repair protein RecF from Escherichia fergusonii (strain ATCC 35469 / DSM 13698 / CCUG 18766 / IAM 14443 / JCM 21226 / LMG 7866 / NBRC 102419 / NCTC 12128 / CDC 0568-73).